A 403-amino-acid chain; its full sequence is Lipase lipl-5 (403 aa).

Residues 1 to 18 (MWRFAVFLAAFFVQDVVG) form the signal peptide. The N-linked (GlcNAc...) asparagine glycan is linked to N64. Residue S167 is the Nucleophile of the active site. N-linked (GlcNAc...) asparagine glycosylation is present at N271. Residues D343 and H375 each act as charge relay system in the active site.

Belongs to the AB hydrolase superfamily. Lipase family.

Its subcellular location is the lysosome lumen. It is found in the secreted. In terms of biological role, lipase involved in lipid homeostasis. Regulates mitochondrial lipid composition, in particular cardiolipins and coenzyme Q-9 levels, in response to nutrient availability. Does not affect global triglyceride levels in response to nutrient availability. However, in coelomocytes, specifically promotes triglyceride catabolism and lifespan extension in response to nutrient deprivation. The chain is Lipase lipl-5 from Caenorhabditis elegans.